Here is a 170-residue protein sequence, read N- to C-terminus: Peptide deformylase (170 aa).

Fe cation is bound by residues C91 and H133. E134 is an active-site residue. Fe cation is bound at residue H137.

This sequence belongs to the polypeptide deformylase family. Fe(2+) is required as a cofactor.

The enzyme catalyses N-terminal N-formyl-L-methionyl-[peptide] + H2O = N-terminal L-methionyl-[peptide] + formate. Functionally, removes the formyl group from the N-terminal Met of newly synthesized proteins. Requires at least a dipeptide for an efficient rate of reaction. N-terminal L-methionine is a prerequisite for activity but the enzyme has broad specificity at other positions. In Yersinia pseudotuberculosis serotype O:1b (strain IP 31758), this protein is Peptide deformylase.